A 255-amino-acid chain; its full sequence is 5'-nucleotidase SurE (255 aa).

D8, D9, S40, and N92 together coordinate a divalent metal cation.

It belongs to the SurE nucleotidase family. The cofactor is a divalent metal cation.

It localises to the cytoplasm. It carries out the reaction a ribonucleoside 5'-phosphate + H2O = a ribonucleoside + phosphate. Functionally, nucleotidase that shows phosphatase activity on nucleoside 5'-monophosphates. In Brucella abortus (strain S19), this protein is 5'-nucleotidase SurE.